Consider the following 1210-residue polypeptide: Epidermal growth factor receptor (1210 aa).

Residues 1–24 (MRPSGTAGAALLALLAALCPASRA) form the signal peptide. Residues 25–645 (LEEKKVCQGT…CARNGPKIPS (621 aa)) lie on the Extracellular side of the membrane. Cysteine 31 and cysteine 58 are oxidised to a cystine. Residues 75–300 (DLSFLKTIQE…CVKKCPRNYV (226 aa)) form an Approximate repeat. N-linked (GlcNAc...) asparagine glycosylation is found at asparagine 128, asparagine 175, and asparagine 196. Disulfide bonds link cysteine 157–cysteine 187, cysteine 190–cysteine 199, cysteine 194–cysteine 207, cysteine 215–cysteine 223, cysteine 219–cysteine 231, cysteine 232–cysteine 240, cysteine 236–cysteine 248, cysteine 251–cysteine 260, cysteine 264–cysteine 291, cysteine 295–cysteine 307, cysteine 311–cysteine 326, cysteine 329–cysteine 333, and cysteine 337–cysteine 362. Serine 229 is modified (phosphoserine). 4 N-linked (GlcNAc...) asparagine glycosylation sites follow: asparagine 352, asparagine 361, asparagine 413, and asparagine 444. An Approximate repeat occupies 390–600 (QELDILKTVK…CVKTCPAGVM (211 aa)). Cystine bridges form between cysteine 470–cysteine 499, cysteine 506–cysteine 515, cysteine 510–cysteine 523, cysteine 526–cysteine 535, cysteine 539–cysteine 555, cysteine 558–cysteine 571, cysteine 562–cysteine 579, cysteine 582–cysteine 591, cysteine 595–cysteine 617, cysteine 620–cysteine 628, and cysteine 624–cysteine 636. N-linked (GlcNAc...) asparagine glycosylation occurs at asparagine 528. Asparagine 568 carries N-linked (GlcNAc...) asparagine glycosylation. Asparagine 603 carries an N-linked (GlcNAc...) asparagine glycan. The chain crosses the membrane as a helical span at residues 646-668 (IATGMVGALLLLLVVALGIGLFM). Residues 669–1210 (RRRHIVRKRT…APQSSEFIGA (542 aa)) lie on the Cytoplasmic side of the membrane. The residue at position 678 (threonine 678) is a Phosphothreonine; by PKC and PKD/PRKD1. The segment at 688 to 704 (LVEPLTPSGEAPNQALL) is important for dimerization, phosphorylation and activation. At threonine 693 the chain carries Phosphothreonine; by PKD/PRKD1. Serine 695 carries the phosphoserine modification. Residues 712-979 (FKKIKVLGSG…KMARDPQRYL (268 aa)) enclose the Protein kinase domain. Residue lysine 716 forms a Glycyl lysine isopeptide (Lys-Gly) (interchain with G-Cter in ubiquitin) linkage. 718–726 (LGSGAFGTV) contributes to the ATP binding site. A Glycyl lysine isopeptide (Lys-Gly) (interchain with G-Cter in ubiquitin) cross-link involves residue lysine 737. Residue lysine 745 participates in ATP binding. Lysine 745 is subject to N6-(2-hydroxyisobutyryl)lysine. Residues lysine 754 and lysine 757 each participate in a glycyl lysine isopeptide (Lys-Gly) (interchain with G-Cter in ubiquitin) cross-link. 790-791 (TQ) serves as a coordination point for ATP. Aspartate 837 serves as the catalytic Proton acceptor. Aspartate 855 is an ATP binding site. A Glycyl lysine isopeptide (Lys-Gly) (interchain with G-Cter in ubiquitin) cross-link involves residue lysine 867. Tyrosine 869 carries the post-translational modification Phosphotyrosine. Residues lysine 929, lysine 960, and lysine 970 each participate in a glycyl lysine isopeptide (Lys-Gly) (interchain with G-Cter in ubiquitin) cross-link. A phosphoserine mark is found at serine 991 and serine 995. Tyrosine 998 and tyrosine 1016 each carry phosphotyrosine; by autocatalysis. Residues serine 1026 and serine 1039 each carry the phosphoserine modification. Position 1041 is a phosphothreonine (threonine 1041). The residue at position 1042 (serine 1042) is a Phosphoserine. The S-palmitoyl cysteine moiety is linked to residue cysteine 1049. Position 1064 is a phosphoserine (serine 1064). The residue at position 1069 (tyrosine 1069) is a Phosphotyrosine. Phosphoserine is present on residues serine 1070, serine 1071, and serine 1081. Phosphotyrosine; by autocatalysis occurs at positions 1092 and 1110. A disordered region spans residues 1097-1137 (VPKRPAGSVQNPVYHNQPLNPAPSRDPHYQDPHSTAVGNPE). Polar residues-rich tracts occupy residues 1104-1115 (SVQNPVYHNQPL) and 1128-1137 (PHSTAVGNPE). A lipid anchor (S-palmitoyl cysteine) is attached at cysteine 1146. Phosphoserine is present on serine 1166. Residues tyrosine 1172 and tyrosine 1197 each carry the phosphotyrosine; by autocatalysis modification. Residue arginine 1199 is modified to Omega-N-methylarginine.

The protein belongs to the protein kinase superfamily. Tyr protein kinase family. EGF receptor subfamily. As to quaternary structure, binding of the ligand triggers homo- and/or heterodimerization of the receptor triggering its autophosphorylation. Heterodimer with ERBB2. Forms a complex with CCDC88A/GIV (via SH2-like regions) and GNAI3 which leads to enhanced EGFR signaling and triggering of cell migration; binding to CCDC88A requires autophosphorylation of the EGFR C-terminal region, and ligand stimulation is required for recruitment of GNAI3 to the complex. Interacts with ERRFI1; inhibits dimerization of the kinase domain and autophosphorylation. Part of a complex with ERBB2 and either PIK3C2A or PIK3C2B. Interacts with GRB2; an adapter protein coupling the receptor to downstream signaling pathways. Interacts with GAB2; involved in signaling downstream of EGFR. Interacts with STAT3; mediates EGFR downstream signaling in cell proliferation. Interacts with RIPK1; involved in NF-kappa-B activation. Interacts (autophosphorylated) with CBL, CBLB and CBLC; involved in EGFR ubiquitination and regulation; interaction with CBL is reduced in the presence of tensin TNS4. Interacts with SOCS5; regulates EGFR degradation through ELOC- and ELOB-mediated ubiquitination and proteasomal degradation. Interacts with PRMT5; methylates EGFR and enhances interaction with PTPN6. Interacts (phosphorylated) with PTPN6; inhibits EGFR-dependent activation of MAPK/ERK. Interacts with COPG1; essential for regulation of EGF-dependent nuclear transport of EGFR by retrograde trafficking from the Golgi to the ER. Interacts with TNK2; this interaction is dependent on EGF stimulation and kinase activity of EGFR. Interacts with PCNA; positively regulates PCNA. Interacts with PELP1. Interacts with MUC1. Interacts with AP2M1. Interacts with FER. May interact with EPS8; mediates EPS8 phosphorylation. Interacts (via SH2 domains) with GRB2, NCK1 and NCK2. Interacts with ATXN2. Interacts with GAREM1. Interacts (ubiquitinated) with ANKRD13A/B/D; the interaction is direct and may regulate EGFR internalization after EGF stimulation. Interacts with GPER1; the interaction occurs in an estrogen-dependent manner. Interacts (via C-terminal cytoplasmic kinase domain) with ZPR1 (via zinc fingers). Interacts with RNF115 and RNF126. Interacts with GPRC5A (via its transmembrane domain). Interacts with FAM83B; positively regulates EGFR inducing its autophosphorylation in absence of stimulation by EGF. Interacts with LAPTM4B; positively correlates with EGFR activation. Interacts with STX19. Interacts with CD44. Interacts with PGRMC1; the interaction requires PGRMC1 homodimerization. Interacts with PIKFYVE. Interacts with NEU3. Interacts with TRAF4. Interacts with the ant venom OMEGA-myrmeciitoxin(02)-Mg1a. Interacts with CD82; this interaction facilitates ligand-induced endocytosis of the receptor and its subsequent desensitization. Phosphorylated on Tyr residues in response to EGF. Phosphorylation at Ser-695 is partial and occurs only if Thr-693 is phosphorylated. Phosphorylation at Thr-678 and Thr-693 by PRKD1 inhibits EGF-induced MAPK8/JNK1 activation. Dephosphorylation by PTPRJ prevents endocytosis and stabilizes the receptor at the plasma membrane. Autophosphorylation at Tyr-1197 is stimulated by methylation at Arg-1199 and enhances interaction with PTPN6. Autophosphorylation at Tyr-1092 and/or Tyr-1110 recruits STAT3. Dephosphorylated by PTPN1 and PTPN2. Post-translationally, monoubiquitinated and polyubiquitinated upon EGF stimulation; which does not affect tyrosine kinase activity or signaling capacity but may play a role in lysosomal targeting. Polyubiquitin linkage is mainly through 'Lys-63', but linkage through 'Lys-48', 'Lys-11' and 'Lys-29' also occurs. Deubiquitination by OTUD7B prevents degradation. Ubiquitinated by RNF115 and RNF126. Ubiquitinated by ZNRF1 or CBL at different lysines in response to EGF stimulation; leading to recruitment of the ESCRT machinery and subsequent degradation in the lysosomes. Deubiquitinated by UCHL1 leading to the inhibition of its degradation. In terms of processing, palmitoylated on Cys residues by ZDHHC20. Palmitoylation inhibits internalization after ligand binding, and increases the persistence of tyrosine-phosphorylated EGFR at the cell membrane. Palmitoylation increases the amplitude and duration of EGFR signaling. Methylated. Methylation at Arg-1199 by PRMT5 stimulates phosphorylation at Tyr-1197. As to expression, hypothalamus.

Its subcellular location is the cell membrane. The protein resides in the endoplasmic reticulum membrane. It is found in the golgi apparatus membrane. The protein localises to the nucleus membrane. It localises to the endosome. Its subcellular location is the endosome membrane. The protein resides in the nucleus. It catalyses the reaction L-tyrosyl-[protein] + ATP = O-phospho-L-tyrosyl-[protein] + ADP + H(+). Endocytosis and inhibition of the activated EGFR by phosphatases like PTPRJ and PTPRK constitute immediate regulatory mechanisms. Upon EGF-binding phosphorylates EPS15 that regulates EGFR endocytosis and activity. Moreover, inducible feedback inhibitors including LRIG1, SOCS4, SOCS5 and ERRFI1 constitute alternative regulatory mechanisms for the EGFR signaling. Its function is as follows. Receptor tyrosine kinase binding ligands of the EGF family and activating several signaling cascades to convert extracellular cues into appropriate cellular responses. Known ligands include EGF, TGFA/TGF-alpha, AREG, epigen/EPGN, BTC/betacellulin, epiregulin/EREG and HBEGF/heparin-binding EGF. Ligand binding triggers receptor homo- and/or heterodimerization and autophosphorylation on key cytoplasmic residues. The phosphorylated receptor recruits adapter proteins like GRB2 which in turn activates complex downstream signaling cascades. Activates at least 4 major downstream signaling cascades including the RAS-RAF-MEK-ERK, PI3 kinase-AKT, PLCgamma-PKC and STATs modules. May also activate the NF-kappa-B signaling cascade. Also directly phosphorylates other proteins like RGS16, activating its GTPase activity and probably coupling the EGF receptor signaling to the G protein-coupled receptor signaling. Also phosphorylates MUC1 and increases its interaction with SRC and CTNNB1/beta-catenin. Positively regulates cell migration via interaction with CCDC88A/GIV which retains EGFR at the cell membrane following ligand stimulation, promoting EGFR signaling which triggers cell migration. Plays a role in enhancing learning and memory performance. Plays a role in mammalian pain signaling (long-lasting hypersensitivity). This chain is Epidermal growth factor receptor (EGFR), found in Macaca mulatta (Rhesus macaque).